Reading from the N-terminus, the 2531-residue chain is Serine/threonine-protein kinase ATR (2531 aa).

Residues 1490-2067 (LIVKVAETFG…MWQSAYLLRQ (578 aa)) form the FAT domain. One can recognise a PI3K/PI4K catalytic domain in the interval 2192–2512 (FSDKVKVLHS…VSQLASSLIE (321 aa)). The interval 2198–2204 (VLHSNTK) is G-loop. A catalytic loop region spans residues 2368–2376 (GLGDRHTKN). Residues 2387–2411 (HVDFDMIFNKGETLGTPELVPFRLT) are activation loop. The FATC domain maps to 2499-2531 (HPMQVSQLASSLIELATSEEKLSEMYLGWMATL).

The protein belongs to the PI3/PI4-kinase family. ATM subfamily. Requires Mn(2+) as cofactor.

Its subcellular location is the nucleus. The catalysed reaction is L-seryl-[protein] + ATP = O-phospho-L-seryl-[protein] + ADP + H(+). The enzyme catalyses L-threonyl-[protein] + ATP = O-phospho-L-threonyl-[protein] + ADP + H(+). Serine/threonine protein kinase which activates checkpoint signaling upon genotoxic stresses such as ionizing radiation (IR), ultraviolet light (UV), or DNA replication stalling, thereby acting as a DNA damage sensor. Recognizes the substrate consensus sequence [ST]-Q. Phosphorylates various proteins, which collectively inhibits DNA replication and mitosis and promotes DNA repair and recombination. Prevents mitotic catastrophe by functioning in the S-phase checkpoint and cooperating with atm-1 in the checkpoint response to double-strand breaks (DSBs) after ionizing radiation (IR) to induce cell cycle arrest or apoptosis via the cep-1/p53 pathway. In response to ionizing radiation, probably required for the association between the brc-1-brd-1 heterodimer and rad-51 and let-70 in order to activate E3-ubiquitin ligase activity of the heterodimer and induce ubiquitination at DNA damage sites. The protein is Serine/threonine-protein kinase ATR of Caenorhabditis elegans.